Here is a 466-residue protein sequence, read N- to C-terminus: Flagellum-specific ATP synthase (466 aa).

Residue 194–201 participates in ATP binding; that stretch reads SSSGLGKS.

This sequence belongs to the ATPase alpha/beta chains family.

The protein localises to the cytoplasm. It carries out the reaction ATP + H2O + 4 H(+)(in) = ADP + phosphate + 5 H(+)(out). In terms of biological role, probable catalytic subunit of a protein translocase for flagellum-specific export, or a proton translocase involved in local circuits at the flagellum. May be involved in a specialized protein export pathway that proceeds without signal peptide cleavage. The protein is Flagellum-specific ATP synthase (fliI) of Buchnera aphidicola subsp. Schizaphis graminum (strain Sg).